Consider the following 150-residue polypeptide: Large ribosomal subunit protein uL15 (150 aa).

The segment at 1-51 (MKLHTLRPAKGSVKTSKRIGRGTGSGRGGTSTKGHKGAKSRSGYSSKIGFE) is disordered. Residues 21–31 (RGTGSGRGGTS) are compositionally biased toward gly residues.

The protein belongs to the universal ribosomal protein uL15 family. Part of the 50S ribosomal subunit.

Binds to the 23S rRNA. The protein is Large ribosomal subunit protein uL15 of Cytophaga hutchinsonii (strain ATCC 33406 / DSM 1761 / CIP 103989 / NBRC 15051 / NCIMB 9469 / D465).